We begin with the raw amino-acid sequence, 47 residues long: Defensin-2 (47 aa).

4 cysteine pairs are disulfide-bonded: Cys-3/Cys-47, Cys-14/Cys-35, Cys-20/Cys-41, and Cys-24/Cys-43.

This sequence belongs to the DEFL family. In terms of tissue distribution, epidermis and vascular bundles of pods, stems, roots, leaves and wet or dry seeds.

In terms of biological role, possesses antifungal activity sensitive to inorganic cations. In Pisum sativum (Garden pea), this protein is Defensin-2.